The sequence spans 86 residues: Large ribosomal subunit protein bL27 (86 aa).

The segment at 1–23 (MAHKKAGGSTRNGRDSESKRLGV) is disordered.

It belongs to the bacterial ribosomal protein bL27 family.

In Alkalilimnicola ehrlichii (strain ATCC BAA-1101 / DSM 17681 / MLHE-1), this protein is Large ribosomal subunit protein bL27.